We begin with the raw amino-acid sequence, 193 residues long: dCTP deaminase (193 aa).

Residues 110-115, aspartate 128, 136-138, tyrosine 171, lysine 178, and glutamine 182 each bind dCTP; these read RSSLAR and VLE. Glutamate 138 acts as the Proton donor/acceptor in catalysis. Positions 171 to 193 are disordered; it reads YNKRKNAKYKDQQDAVASRISQD.

Belongs to the dCTP deaminase family. Homotrimer.

It carries out the reaction dCTP + H2O + H(+) = dUTP + NH4(+). It functions in the pathway pyrimidine metabolism; dUMP biosynthesis; dUMP from dCTP (dUTP route): step 1/2. In terms of biological role, catalyzes the deamination of dCTP to dUTP. The protein is dCTP deaminase of Shewanella oneidensis (strain ATCC 700550 / JCM 31522 / CIP 106686 / LMG 19005 / NCIMB 14063 / MR-1).